The sequence spans 453 residues: uncharacterized protein (453 aa).

The 59-residue stretch at 5-63 (LLKKNQSIELTIEDLTHDGSGVGKIDGYPLFIPNTLPGEKVTAKIIKLNKNYGFARMEN) folds into the TRAM domain. Residues Cys-76, Cys-82, Cys-85, and Cys-162 each contribute to the [4Fe-4S] cluster site. S-adenosyl-L-methionine contacts are provided by Gln-285, Tyr-314, Glu-335, and Asp-383. Catalysis depends on Cys-410, which acts as the Nucleophile.

The protein belongs to the class I-like SAM-binding methyltransferase superfamily. RNA M5U methyltransferase family.

This is an uncharacterized protein from Listeria monocytogenes serotype 4b (strain F2365).